The following is a 265-amino-acid chain: uncharacterized protein (265 aa).

Positions Met-1–Ala-23 are cleaved as a signal peptide. Residues Lys-67 to Lys-248 form the NodB homology domain.

It belongs to the polysaccharide deacetylase family.

This is an uncharacterized protein from Geobacillus stearothermophilus (Bacillus stearothermophilus).